The following is a 48-amino-acid chain: Cytochrome c oxidase subunit 2 (48 aa).

Residues 1–14 (MAHPAQLGLQDASS) are Mitochondrial intermembrane-facing. A helical transmembrane segment spans residues 15 to 45 (PIXEELLHFHEDALMIVFLISTLVLYIITTT). The Mitochondrial matrix segment spans residues 46 to 48 (VST).

This sequence belongs to the cytochrome c oxidase subunit 2 family. Component of the cytochrome c oxidase (complex IV, CIV), a multisubunit enzyme composed of 14 subunits. The complex is composed of a catalytic core of 3 subunits MT-CO1, MT-CO2 and MT-CO3, encoded in the mitochondrial DNA, and 11 supernumerary subunits COX4I, COX5A, COX5B, COX6A, COX6B, COX6C, COX7A, COX7B, COX7C, COX8 and NDUFA4, which are encoded in the nuclear genome. The complex exists as a monomer or a dimer and forms supercomplexes (SCs) in the inner mitochondrial membrane with NADH-ubiquinone oxidoreductase (complex I, CI) and ubiquinol-cytochrome c oxidoreductase (cytochrome b-c1 complex, complex III, CIII), resulting in different assemblies (supercomplex SCI(1)III(2)IV(1) and megacomplex MCI(2)III(2)IV(2)). Found in a complex with TMEM177, COA6, COX18, COX20, SCO1 and SCO2. Interacts with TMEM177 in a COX20-dependent manner. Interacts with COX20. Interacts with COX16. The cofactor is Cu cation.

Its subcellular location is the mitochondrion inner membrane. The catalysed reaction is 4 Fe(II)-[cytochrome c] + O2 + 8 H(+)(in) = 4 Fe(III)-[cytochrome c] + 2 H2O + 4 H(+)(out). Functionally, component of the cytochrome c oxidase, the last enzyme in the mitochondrial electron transport chain which drives oxidative phosphorylation. The respiratory chain contains 3 multisubunit complexes succinate dehydrogenase (complex II, CII), ubiquinol-cytochrome c oxidoreductase (cytochrome b-c1 complex, complex III, CIII) and cytochrome c oxidase (complex IV, CIV), that cooperate to transfer electrons derived from NADH and succinate to molecular oxygen, creating an electrochemical gradient over the inner membrane that drives transmembrane transport and the ATP synthase. Cytochrome c oxidase is the component of the respiratory chain that catalyzes the reduction of oxygen to water. Electrons originating from reduced cytochrome c in the intermembrane space (IMS) are transferred via the dinuclear copper A center (CU(A)) of subunit 2 and heme A of subunit 1 to the active site in subunit 1, a binuclear center (BNC) formed by heme A3 and copper B (CU(B)). The BNC reduces molecular oxygen to 2 water molecules using 4 electrons from cytochrome c in the IMS and 4 protons from the mitochondrial matrix. In Polypterus sp. (Bichir), this protein is Cytochrome c oxidase subunit 2 (mt-co2).